Here is a 560-residue protein sequence, read N- to C-terminus: Nuclear receptor subfamily 5 group A member 2 (560 aa).

Residues 17–54 are disordered; it reads GLPAIAPAPGSETPHSPKLEEKHREKRAGLPDRHRRPI. Residues 31-48 are compositionally biased toward basic and acidic residues; sequence HSPKLEEKHREKRAGLPD. Residues 104–179 constitute a DNA-binding region (nuclear receptor); that stretch reads EELCPVCGDK…VGMKLEAVRA (76 aa). Zn(2+) is bound by residues cysteine 107, cysteine 110, cysteine 124, cysteine 127, cysteine 143, cysteine 149, cysteine 159, and cysteine 162. 2 NR C4-type zinc fingers span residues 107–127 and 143–162; these read CPVCGDKVSGYHYGLLTCESC and CIENQNCQIDKTQRKRCPYC. The segment at 173–188 is C-terminal extension (CTE); it reads KLEAVRADRMRGGRNK. The short motif at 189–208 is the FTZ-F1 box element; sequence FGPMYKRDRALKQQKKALIR. Lysine 289 participates in a covalent cross-link: Glycyl lysine isopeptide (Lys-Gly) (interchain with G-Cter in SUMO1). The region spanning 319–558 is the NR LBD domain; it reads SIPHLILELL…NLLIEMLHAK (240 aa). 2 residues coordinate a phospholipid derivative: tyrosine 535 and lysine 539. The interval 547–558 is AF-2; that stretch reads YNNLLIEMLHAK.

The protein belongs to the nuclear hormone receptor family. NR5 subfamily. In terms of assembly, monomer; Binds DNA as a monomer. Interacts with nuclear receptor corepressors NR0B1 and NR0B2; repressing NR5A2 nuclear receptor activity. Interacts with nuclear receptor coactivators CTNNB1, PPARGC1A and NCOA2; interaction takes place following ligand-binding and promotes target gene activation. Interacts (when sumoylated) with GPS2; interaction with GPS2 onto hepatic acute phase protein promoters prevents N-Cor corepressor complex dissociation. Interacts with HNF1A. Interacts with GRIP1. Sumoylated by SUMO1 at Lys-289 during the hepatic acute phase response, leading to promote interaction with GPS2 and prevent N-Cor corepressor complex dissociation.

The protein resides in the nucleus. The protein localises to the chromosome. Functionally, orphan nuclear receptor that binds DNA as a monomer to the 5'-TCAAGGCCA-3' sequence and controls expression of target genes: regulates key biological processes, such as early embryonic development, cholesterol and bile acid synthesis pathways, as well as liver and pancreas morphogenesis. Ligand-binding causes conformational change which causes recruitment of coactivators, promoting target gene activation. The specific ligand is unknown, but specific phospholipids, such as phosphatidylethanolamine, phosphatidylserine, dilauroyl phosphatidylcholine and diundecanoyl phosphatidylcholine can act as ligand in vitro. Acts as a pioneer transcription factor, which unwraps target DNA from histones and elicits local opening of closed chromatin. Plays a central role during preimplantation stages of embryonic development. Plays a minor role in zygotic genome activation (ZGA) by regulating a small set of two-cell stage genes. Plays a major role in morula development (2-16 cells embryos) by acting as a master regulator at the 8-cell stage, controlling expression of lineage-specifying transcription factors and genes involved in mitosis, telomere maintenance and DNA repair. Zygotic NR5A2 binds to both closed and open chromatin with other transcription factors, often at SINE B1/Alu repeats DNA elements, promoting chromatin accessibility at nearby regulatory regions. Also involved in the epiblast stage of development and embryonic stem cell pluripotency, by promoting expression of POU5F1/OCT4. Regulates other processes later in development, such as formation of connective tissue in lower jaw and middle ear, neural stem cell differentiation, ovarian follicle development and Sertoli cell differentiation. Involved in exocrine pancreas development and acinar cell differentiation. Acts as an essential transcriptional regulator of lipid metabolism. Key regulator of cholesterol 7-alpha-hydroxylase gene (CYP7A) expression in liver. Also acts as a negative regulator of inflammation in different organs, such as, liver and pancreas. Protects against intestinal inflammation via its ability to regulate glucocorticoid production. Plays an anti-inflammatory role during the hepatic acute phase response by acting as a corepressor: inhibits the hepatic acute phase response by preventing dissociation of the N-Cor corepressor complex. Acts as a regulator of immunity by promoting lymphocyte T-cell development, proliferation and effector functions. Also involved in resolution of endoplasmic reticulum stress in the liver. This is Nuclear receptor subfamily 5 group A member 2 from Rattus norvegicus (Rat).